Consider the following 83-residue polypeptide: Putative defensin-like protein 131 (83 aa).

Positions 1 to 34 are cleaved as a signal peptide; it reads MAKNRVLTIFYCTIYYCICFKYVLLGMVVEKTQG. Disulfide bonds link C37–C83, C46–C65, C51–C77, and C55–C79.

The protein belongs to the DEFL family.

The protein resides in the secreted. The polypeptide is Putative defensin-like protein 131 (LCR29) (Arabidopsis thaliana (Mouse-ear cress)).